The sequence spans 819 residues: Zinc finger protein with KRAB and SCAN domains 5 (819 aa).

An SCAN box domain is found at Q51–L132. Glycyl lysine isopeptide (Lys-Gly) (interchain with G-Cter in SUMO2) cross-links involve residues K214, K246, and K302. Residues E216–K287 enclose the KRAB domain. Disordered stretches follow at residues S236–N263 and E283–G340. Over residues L240–C249 the composition is skewed to basic and acidic residues. A compositionally biased stretch (basic and acidic residues) spans V329–G340. 9 consecutive C2H2-type zinc fingers follow at residues H341–H363, F369–H391, Y397–H419, Y425–H447, H540–H562, F568–H590, Y596–H618, F624–H646, and H652–H674. K700 is covalently cross-linked (Glycyl lysine isopeptide (Lys-Gly) (interchain with G-Cter in SUMO2)). C2H2-type zinc fingers lie at residues Y708–H730, H764–H786, and L792–H814. K776 is covalently cross-linked (Glycyl lysine isopeptide (Lys-Gly) (interchain with G-Cter in SUMO2)).

Belongs to the krueppel C2H2-type zinc-finger protein family. As to expression, testis specific.

The protein resides in the nucleus. Functionally, may be involved in transcriptional regulation. In Mus musculus (Mouse), this protein is Zinc finger protein with KRAB and SCAN domains 5 (Zkscan5).